A 559-amino-acid polypeptide reads, in one-letter code: Probable inorganic carbon transporter subunit DabB1 (559 aa).

The next 13 helical transmembrane spans lie at 4 to 24, 33 to 53, 76 to 96, 106 to 126, 173 to 193, 202 to 222, 240 to 260, 273 to 293, 310 to 330, 375 to 395, 408 to 428, 440 to 460, and 487 to 507; these read LQWL…LFAA, LSVA…VAYI, LSSI…VYSI, PRFF…VAAG, LVLA…PTLF, ATIM…LSAF, GPTP…GFII, VLHM…VLML, MGFM…FHLI, LPWL…LVIA, GAIV…FATH, MMIL…GHAF, and GLVF…YLAS.

The protein belongs to the inorganic carbon transporter (TC 9.A.2) DabB family. In terms of assembly, forms a complex with DabA1.

The protein localises to the cell inner membrane. Its function is as follows. Part of an energy-coupled inorganic carbon pump. This Halothiobacillus neapolitanus (strain ATCC 23641 / c2) (Thiobacillus neapolitanus) protein is Probable inorganic carbon transporter subunit DabB1.